Consider the following 395-residue polypeptide: N5-carboxyaminoimidazole ribonucleotide synthase (395 aa).

Residues Lys109, Lys149, Glu184–Ile187, Glu192, and Asn268–Glu269 each bind ATP. An ATP-grasp domain is found at Arg113–Ala298.

The protein belongs to the PurK/PurT family. As to quaternary structure, homodimer.

The enzyme catalyses 5-amino-1-(5-phospho-beta-D-ribosyl)imidazole + hydrogencarbonate + ATP = 5-carboxyamino-1-(5-phospho-D-ribosyl)imidazole + ADP + phosphate + 2 H(+). The protein operates within purine metabolism; IMP biosynthesis via de novo pathway; 5-amino-1-(5-phospho-D-ribosyl)imidazole-4-carboxylate from 5-amino-1-(5-phospho-D-ribosyl)imidazole (N5-CAIR route): step 1/2. Catalyzes the ATP-dependent conversion of 5-aminoimidazole ribonucleotide (AIR) and HCO(3)(-) to N5-carboxyaminoimidazole ribonucleotide (N5-CAIR). This Synechococcus elongatus (strain ATCC 33912 / PCC 7942 / FACHB-805) (Anacystis nidulans R2) protein is N5-carboxyaminoimidazole ribonucleotide synthase.